The primary structure comprises 479 residues: MHFSTVTRDMEAFAASSLSGLGSPSPGADPFGPREPPPPRYDPCAAVPGAPGPPPPRAYPFAPAPGAAGSSAAESEGPGASRAAAVKAPVKKNPKVASVSVQLEMKALWDEFNQLGTEMIVTKAGRRMFPTFQVKLFGMDPMADYMLLMDFVPVDDKRYRYAFHSSSWLVAGKADPATPGRVHYHPDSPAKGAQWMKQIVSFDKLKLTNNLLDDNGQIILNSMHRYQPRFHVVYVDPRKDSEKYAEENFKTFVFEETRFTAVTAYQNHRITQLKIASNPFAKGFRDCDPEDWPRNHRPGALPLVSAFARSRNPVASPTQPNGSDKDAAEARREFDRDSGPAALGDATHPPQLLARVLSPALPGPGGLVPLPGGSGGRHSPPHADLRLEAPGASEPLHHHPYKYPAAAYDHYLGAKSRPAPYPLPGLRGHGYHPHAHPHAHPHHHHHPAVNPAAAAAAAAAANVYSSAAAPPGAYDYCPR.

Low complexity-rich tracts occupy residues 15 to 31 (ASSL…ADPF) and 59 to 86 (YPFA…AAAV). The tract at residues 15 to 86 (ASSLSGLGSP…GPGASRAAAV (72 aa)) is disordered. The segment at residues 108-286 (LWDEFNQLGT…SNPFAKGFRD (179 aa)) is a DNA-binding region (T-box). Residues 311–398 (RNPVASPTQP…APGASEPLHH (88 aa)) are disordered. The span at 313 to 322 (PVASPTQPNG) shows a compositional bias: polar residues. The segment covering 323-338 (SDKDAAEARREFDRDS) has biased composition (basic and acidic residues). The Nuclear localization signal signature appears at 415-426 (KSRPAPYPLPGL).

Binds DNA as a dimer. Interacts with DSCR6. Interacts with NKX2-5. In terms of tissue distribution, expressed in skeletal muscle, lung and testis. Highly expressed in hair follicle stem cell, but not in terminally differentiating cells.

It is found in the nucleus. Functionally, transcription factor that plays a key role in cardiovascular development by promoting pharyngeal arch segmentation during embryonic development. Also involved in craniofacial muscle development. Together with NKX2-5, acts as a regulator of asymmetric cardiac morphogenesis by promoting expression of PITX2. Acts upstream of TBX1 for the formation of the thymus and parathyroid glands from the third pharyngeal pouch. Required for hair follicle stem cell self-renewal. Binds to the palindromic T site 5'-TTCACACCTAGGTGTGAA-3' DNA sequence. This Mus musculus (Mouse) protein is T-box transcription factor TBX1.